The primary structure comprises 489 residues: Rhamnulokinase (489 aa).

13-17 is a binding site for ATP; sequence ASSGR. Cysteines 68 and 222 form a disulfide. Residues glycine 83 and 236 to 238 each bind substrate; that span reads HDT. Catalysis depends on aspartate 237, which acts as the Proton acceptor. Position 259 (threonine 259) interacts with ATP. Asparagine 296 is a binding site for substrate. ATP is bound at residue glutamine 304. Cysteines 353 and 370 form a disulfide. Glycine 402 lines the ATP pocket. A disulfide bond links cysteine 413 and cysteine 417.

Belongs to the rhamnulokinase family. The cofactor is Mg(2+).

The catalysed reaction is L-rhamnulose + ATP = L-rhamnulose 1-phosphate + ADP + H(+). It functions in the pathway carbohydrate degradation; L-rhamnose degradation; glycerone phosphate from L-rhamnose: step 2/3. In terms of biological role, involved in the catabolism of L-rhamnose (6-deoxy-L-mannose). Catalyzes the transfer of the gamma-phosphate group from ATP to the 1-hydroxyl group of L-rhamnulose to yield L-rhamnulose 1-phosphate. This Salmonella schwarzengrund (strain CVM19633) protein is Rhamnulokinase.